We begin with the raw amino-acid sequence, 36 residues long: Pancreatic polypeptide (36 aa).

Tyr36 is modified (tyrosine amide).

Belongs to the NPY family.

It localises to the secreted. In terms of biological role, hormone secreted by pancreatic cells that acts as a regulator of pancreatic and gastrointestinal functions probably by signaling through the G protein-coupled receptor NPY4R2. This is Pancreatic polypeptide (PPY) from Oryctolagus cuniculus (Rabbit).